Here is a 316-residue protein sequence, read N- to C-terminus: Aspartate-semialdehyde dehydrogenase (316 aa).

NADP(+) is bound by residues 13-16 (TGAV) and 41-42 (RS). Arginine 101 lines the phosphate pocket. Cysteine 132 functions as the Acyl-thioester intermediate in the catalytic mechanism. Glutamine 159 contacts substrate. 162–163 (SG) is a binding site for NADP(+). Lysine 216 serves as a coordination point for phosphate. Residue arginine 238 coordinates substrate. The active-site Proton acceptor is histidine 245. Asparagine 316 contacts NADP(+).

This sequence belongs to the aspartate-semialdehyde dehydrogenase family. Homodimer.

The enzyme catalyses L-aspartate 4-semialdehyde + phosphate + NADP(+) = 4-phospho-L-aspartate + NADPH + H(+). It functions in the pathway amino-acid biosynthesis; L-lysine biosynthesis via DAP pathway; (S)-tetrahydrodipicolinate from L-aspartate: step 2/4. Its pathway is amino-acid biosynthesis; L-methionine biosynthesis via de novo pathway; L-homoserine from L-aspartate: step 2/3. It participates in amino-acid biosynthesis; L-threonine biosynthesis; L-threonine from L-aspartate: step 2/5. Functionally, catalyzes the NADPH-dependent formation of L-aspartate-semialdehyde (L-ASA) by the reductive dephosphorylation of L-aspartyl-4-phosphate. The chain is Aspartate-semialdehyde dehydrogenase (asd) from Vibrio mimicus.